The primary structure comprises 218 residues: Glutathione S-transferase Mu 2 (218 aa).

Residues 2 to 88 (PMTLGYWDIR…YLARKHNLCG (87 aa)) enclose the GST N-terminal domain. 7 to 8 (YW) contacts glutathione. A phosphoserine mark is found at S27 and S44. Residues 43–46 (RSQW), K50, 59–60 (NL), and 72–73 (QS) each bind glutathione. The region spanning 90 to 208 (TEEERIRVDI…KSSRFLSKPI (119 aa)) is the GST C-terminal domain. Residue Y116 coordinates substrate. S117 carries the phosphoserine modification.

It belongs to the GST superfamily. Mu family. In terms of assembly, homodimer.

It is found in the cytoplasm. The catalysed reaction is RX + glutathione = an S-substituted glutathione + a halide anion + H(+). It carries out the reaction 11(S)-hydroxy-14(S),15(S)-epoxy-(5Z,8Z,12E)-eicosatrienoate + glutathione = (11S,15S)-dihydroxy-14(R)-S-glutathionyl-(5Z,8Z,12E)-eicosatrienoate. In terms of biological role, conjugation of reduced glutathione to a wide number of exogenous and endogenous hydrophobic electrophiles. Participates in the formation of novel hepoxilin regioisomers. This chain is Glutathione S-transferase Mu 2, found in Mus musculus (Mouse).